Reading from the N-terminus, the 366-residue chain is Beta sliding clamp (366 aa).

The segment at Met1 to Glu125 is i. An II region spans residues Val126–Asp253. The segment at Lys254–Leu366 is III.

The protein belongs to the beta sliding clamp family. As to quaternary structure, forms a ring-shaped head-to-tail homodimer around DNA which binds and tethers DNA polymerases and other proteins to the DNA. The DNA replisome complex has a single clamp-loading complex (3 tau and 1 each of delta, delta', psi and chi subunits) which binds 3 Pol III cores (1 core on the leading strand and 2 on the lagging strand) each with a beta sliding clamp dimer. Additional proteins in the replisome are other copies of gamma, psi and chi, Ssb, DNA helicase and RNA primase.

The protein resides in the cytoplasm. Its function is as follows. Confers DNA tethering and processivity to DNA polymerases and other proteins. Acts as a clamp, forming a ring around DNA (a reaction catalyzed by the clamp-loading complex) which diffuses in an ATP-independent manner freely and bidirectionally along dsDNA. Initially characterized for its ability to contact the catalytic subunit of DNA polymerase III (Pol III), a complex, multichain enzyme responsible for most of the replicative synthesis in bacteria; Pol III exhibits 3'-5' exonuclease proofreading activity. The beta chain is required for initiation of replication as well as for processivity of DNA replication. The sequence is that of Beta sliding clamp (dnaN) from Escherichia coli O157:H7.